Here is a 538-residue protein sequence, read N- to C-terminus: Carotenoid 9,10(9',10')-cleavage dioxygenase 1 (538 aa).

The Fe cation site is built by His222, His270, His336, and His523.

The protein belongs to the carotenoid oxygenase family. Homodimer. The cofactor is Fe(2+). In terms of tissue distribution, high expression in flowers and siliques. Also detected in stems, leaves and roots.

The protein localises to the cytoplasm. The catalysed reaction is all-trans-zeaxanthin + 2 O2 = 4,9-dimethyldodeca-2,4,6,8,10-pentaenedial + 2 (3R)-hydroxy-beta-ionone. Functionally, cleaves a variety of carotenoids symmetrically at both the 9-10 and 9'-10' double bonds. Active on beta,beta-carotene, lutein, zeaxanthin, all-trans-violaxanthin, 9-cis-violaxanthin and 9'-cis-neoxanthin. With most substrates, the carotenoid is symmetrically cleaved. Probably not involved in abscisic acid biosynthesis. In Arabidopsis thaliana (Mouse-ear cress), this protein is Carotenoid 9,10(9',10')-cleavage dioxygenase 1 (CCD1).